Consider the following 119-residue polypeptide: Large ribosomal subunit protein eL31 (119 aa).

The protein belongs to the eukaryotic ribosomal protein eL31 family.

In Cyanophora paradoxa, this protein is Large ribosomal subunit protein eL31 (RPL31).